A 37-amino-acid polypeptide reads, in one-letter code: Photosystem I reaction center subunit IX (37 aa).

The helical transmembrane segment at 4–24 (FLSSAPVLLTAMMVFTAGLLI) threads the bilayer.

This sequence belongs to the PsaJ family.

It is found in the cellular thylakoid membrane. Its function is as follows. May help in the organization of the PsaE and PsaF subunits. The protein is Photosystem I reaction center subunit IX of Picosynechococcus sp. (strain ATCC 27264 / PCC 7002 / PR-6) (Agmenellum quadruplicatum).